The primary structure comprises 306 residues: Probable cobalamin biosynthesis protein CobD (306 aa).

5 helical membrane passes run 54–74, 88–108, 155–175, 215–235, and 286–306; these read LFGF…TYEI, ISIY…IEFS, ITDS…PGAF, IAGM…KSAI, and SLKA…VLLM.

The protein belongs to the CobD/CbiB family.

Its subcellular location is the cell membrane. The protein operates within cofactor biosynthesis; adenosylcobalamin biosynthesis. Its function is as follows. Converts cobyric acid to cobinamide by the addition of aminopropanol on the F carboxylic group. This is Probable cobalamin biosynthesis protein CobD from Methanococcus maripaludis (strain C7 / ATCC BAA-1331).